Here is a 370-residue protein sequence, read N- to C-terminus: MFREKLKRELQGIKDENLYRKLRNQDDFILNFSTNDYLGLSKNEEVILAYNEGLKDGAGSTGSRLTSGNFKLHEKLEGVISEFKETEKSLVYSSGYAANVGVISALAKKGDLVLSDELNHASIIDGIRLSRADKLIYRHSDVQNLIEILEKNKYYENIIVVTDSVFSMDGDVSPIDKIAKIIDEYNAVLIIDDAHGTGVLGQGKGTLKHFKVKASDNIIQIGTLSKAIGTSGGFVSGIEELIDYLINNSRSFIYSTSLPPAVISASIKSFELVEKERLSKNLEKNIICANKLFKNHGFIKCESITPIYPFVFGEKSIDISKGLINHGIFGVPIRYPTVKKGMERIRISITSKHEKNDFKYLCEKIDKLTI.

Arg-20 provides a ligand contact to substrate. Pyridoxal 5'-phosphate is bound at residue 95-96 (GY). Substrate is bound at residue His-120. Pyridoxal 5'-phosphate is bound by residues Ser-167, 192 to 195 (DDAH), and 223 to 226 (TLSK). N6-(pyridoxal phosphate)lysine is present on Lys-226. Substrate is bound at residue Thr-337.

It belongs to the class-II pyridoxal-phosphate-dependent aminotransferase family. BioF subfamily. In terms of assembly, homodimer. The cofactor is pyridoxal 5'-phosphate.

It catalyses the reaction 6-carboxyhexanoyl-[ACP] + L-alanine + H(+) = (8S)-8-amino-7-oxononanoate + holo-[ACP] + CO2. It participates in cofactor biosynthesis; biotin biosynthesis. Its function is as follows. Catalyzes the decarboxylative condensation of pimeloyl-[acyl-carrier protein] and L-alanine to produce 8-amino-7-oxononanoate (AON), [acyl-carrier protein], and carbon dioxide. This Methanococcus vannielii (strain ATCC 35089 / DSM 1224 / JCM 13029 / OCM 148 / SB) protein is Putative 8-amino-7-oxononanoate synthase (bioF).